The following is a 369-amino-acid chain: Flagellar P-ring protein (369 aa).

The first 23 residues, 1–23 (MRIASFFTVLLTLLTLNITPASA), serve as a signal peptide directing secretion.

Belongs to the FlgI family. The basal body constitutes a major portion of the flagellar organelle and consists of four rings (L,P,S, and M) mounted on a central rod.

The protein localises to the periplasm. Its subcellular location is the bacterial flagellum basal body. Its function is as follows. Assembles around the rod to form the L-ring and probably protects the motor/basal body from shearing forces during rotation. In Pectobacterium atrosepticum (strain SCRI 1043 / ATCC BAA-672) (Erwinia carotovora subsp. atroseptica), this protein is Flagellar P-ring protein.